The following is a 206-amino-acid chain: Threonine efflux protein (206 aa).

Residues M1–P21 form a helical membrane-spanning segment. The Periplasmic portion of the chain corresponds to D22–L43. A helical membrane pass occupies residues G44 to I64. The Cytoplasmic portion of the chain corresponds to E65–K66. Residues M67 to Y87 form a helical membrane-spanning segment. At Q88–R149 the chain is on the periplasmic side. Residues W150–L173 form a helical membrane-spanning segment. The Cytoplasmic segment spans residues P174–R206.

The protein belongs to the Rht family.

The protein resides in the cell inner membrane. Its function is as follows. Conducts the efflux of threonine. The chain is Threonine efflux protein (rhtC) from Salmonella typhimurium (strain LT2 / SGSC1412 / ATCC 700720).